Reading from the N-terminus, the 267-residue chain is 5'-nucleotidase SurE (267 aa).

A divalent metal cation is bound by residues aspartate 9, aspartate 10, serine 40, and asparagine 97.

Belongs to the SurE nucleotidase family. The cofactor is a divalent metal cation.

The protein resides in the cytoplasm. The catalysed reaction is a ribonucleoside 5'-phosphate + H2O = a ribonucleoside + phosphate. Functionally, nucleotidase that shows phosphatase activity on nucleoside 5'-monophosphates. The chain is 5'-nucleotidase SurE from Helicobacter pylori (strain HPAG1).